Here is a 546-residue protein sequence, read N- to C-terminus: Probable zinc metalloprotease EGY2, chloroplastic (546 aa).

Residues 1-64 (MQLPAMSCSP…QIRNRRFVCQ (64 aa)) constitute a chloroplast transit peptide. The tract at residues 67-143 (TETEPDGDGN…DATPASDAQE (77 aa)) is disordered. Over residues 69–86 (TEPDGDGNGDEEKEELGD) the composition is skewed to acidic residues. 2 stretches are compositionally biased toward polar residues: residues 89 to 110 (SSPSVDSVTQENGSAESETNAD) and 118 to 130 (NTEPLSSSDTVQN). A run of 7 helical transmembrane segments spans residues 257–277 (AVPEWFAAASFGVVTIFTLLL), 301–321 (VYGALVTAAIIGVHEIAHILA), 326–346 (GIKLAVPYFVPSWQIGSFGAI), 364–384 (AAGPLAGFSLGFVLLLLGFIL), 427–447 (PLVLWAWAGLLINAINSIPAG), 474–494 (LLGISALFNDVAFYWVVLIFF), and 514–534 (YISIGVAILLFGLLVCLPYPF).

Belongs to the peptidase M50B family.

The protein resides in the plastid. Its subcellular location is the chloroplast membrane. Probable membrane-associated metalloprotease that may be involved in chloroplast development. The polypeptide is Probable zinc metalloprotease EGY2, chloroplastic (EGY2) (Oryza sativa subsp. japonica (Rice)).